The following is a 192-amino-acid chain: Calcium-binding protein K (192 aa).

EF-hand domains lie at Trp-60–Ala-95 and Pro-96–Cys-131. Ca(2+)-binding residues include Asp-73, Asp-75, Asn-77, Glu-84, Asp-109, Asp-111, Ser-113, Tyr-115, and Glu-120.

The protein belongs to the recoverin family.

The sequence is that of Calcium-binding protein K (cbpK) from Dictyostelium discoideum (Social amoeba).